Consider the following 62-residue polypeptide: Metallothionein-like protein 3A (62 aa).

This sequence belongs to the metallothionein superfamily. Type 15 family.

Metallothioneins have a high content of cysteine residues that bind various heavy metals. This chain is Metallothionein-like protein 3A (MT3A), found in Oryza sativa subsp. indica (Rice).